We begin with the raw amino-acid sequence, 511 residues long: Apolipoprotein N-acyltransferase (511 aa).

The next 6 helical transmembrane spans lie at 24 to 44 (LALA…LLYL), 58 to 78 (GWWY…VSIH), 90 to 110 (FLML…AWLW), 125 to 145 (LAFA…LTGF), 163 to 183 (VPVG…ALLV), and 192 to 212 (GASL…GLYL). The CN hydrolase domain maps to 230–470 (IQGNIAQELK…QGILRGEVIP (241 aa)). The active-site Proton acceptor is the E269. K330 is an active-site residue. C382 functions as the Nucleophile in the catalytic mechanism. A helical transmembrane segment spans residues 482 to 502 (VWPLAGLAGVLLLWALLGRQL).

Belongs to the CN hydrolase family. Apolipoprotein N-acyltransferase subfamily.

It localises to the cell inner membrane. It carries out the reaction N-terminal S-1,2-diacyl-sn-glyceryl-L-cysteinyl-[lipoprotein] + a glycerophospholipid = N-acyl-S-1,2-diacyl-sn-glyceryl-L-cysteinyl-[lipoprotein] + a 2-acyl-sn-glycero-3-phospholipid + H(+). The protein operates within protein modification; lipoprotein biosynthesis (N-acyl transfer). In terms of biological role, catalyzes the phospholipid dependent N-acylation of the N-terminal cysteine of apolipoprotein, the last step in lipoprotein maturation. This is Apolipoprotein N-acyltransferase from Pseudomonas aeruginosa (strain UCBPP-PA14).